The chain runs to 517 residues: 2,4,6-trichlorophenol monooxygenase (517 aa).

The protein belongs to the FADH(2)-utilizing monooxygenase family. Homotetramer in solution.

It catalyses the reaction 2,4,6-trichlorophenol + FADH2 + O2 = 2-chloro-6-hydroxy-1,4-benzoquinone + FAD + 2 chloride + 3 H(+). The catalysed reaction is 2,4,6-trichlorophenol + FADH2 + O2 = 2,6-dichlorobenzoquinone + FAD + chloride + H2O + H(+). The enzyme catalyses 2,6-dichlorobenzoquinone + H2O = 2-chloro-6-hydroxy-1,4-benzoquinone + chloride + 2 H(+). The protein operates within aromatic compound metabolism. It participates in xenobiotic degradation. Functionally, involved in the degradation of 2,4,6-trichlorophenol (2,4,6-TCP). Catalyzes the conversion of 2,4,6-TCP to 6-chlorohydroxyquinol (6-CHQ). The monooxygenase oxidizes 2,4,6-TCP to 2,6-dichloroquinone (2,6-DCBQ), which remains with the enzyme and is hydrolyzed to 2-chlorohydroxyquinone. 2-chlorohydroxyquinone is chemically reduced by ascorbate and NADH to 6-chlorohydroxyquinol (6-CHQ). The protein is 2,4,6-trichlorophenol monooxygenase of Cupriavidus pinatubonensis (strain JMP 134 / LMG 1197) (Cupriavidus necator (strain JMP 134)).